We begin with the raw amino-acid sequence, 465 residues long: GTPase Der (465 aa).

EngA-type G domains follow at residues 3 to 166 and 184 to 358; these read FLVA…LNEY and IHFS…ACAN. GTP-binding positions include 9–16, 56–60, 118–121, 190–197, 237–241, and 302–305; these read GRANVGKS, DTGGI, NKVD, GRPNVGKS, DTAGV, and NKWD. One can recognise a KH-like domain in the interval 359–443; sequence KKITTADATR…PIVFEFKQSE (85 aa). The tract at residues 446–465 is disordered; it reads FADRKNKRSKDEGSKSKKVK.

The protein belongs to the TRAFAC class TrmE-Era-EngA-EngB-Septin-like GTPase superfamily. EngA (Der) GTPase family. As to quaternary structure, associates with the 50S ribosomal subunit.

Functionally, GTPase that plays an essential role in the late steps of ribosome biogenesis. In Francisella tularensis subsp. novicida (strain U112), this protein is GTPase Der.